We begin with the raw amino-acid sequence, 336 residues long: Quinolinate synthase (336 aa).

2 residues coordinate iminosuccinate: His25 and Ser42. Cys86 provides a ligand contact to [4Fe-4S] cluster. Iminosuccinate-binding positions include 117 to 119 (YIN) and Ser138. [4Fe-4S] cluster is bound at residue Cys198. Residues 224–226 (HPE) and Thr241 each bind iminosuccinate. Cys288 is a [4Fe-4S] cluster binding site.

This sequence belongs to the quinolinate synthase family. Type 3 subfamily. The cofactor is [4Fe-4S] cluster.

The protein localises to the cytoplasm. It carries out the reaction iminosuccinate + dihydroxyacetone phosphate = quinolinate + phosphate + 2 H2O + H(+). The protein operates within cofactor biosynthesis; NAD(+) biosynthesis; quinolinate from iminoaspartate: step 1/1. Functionally, catalyzes the condensation of iminoaspartate with dihydroxyacetone phosphate to form quinolinate. In Helicobacter pylori (strain HPAG1), this protein is Quinolinate synthase.